Reading from the N-terminus, the 417-residue chain is Riboflavin biosynthesis protein RibBA (417 aa).

Residues Met-1 to Lys-204 are DHBP synthase. D-ribulose 5-phosphate is bound by residues Arg-28 to Glu-29, Asp-33, Arg-141 to Thr-145, and Glu-165. Glu-29 provides a ligand contact to Mg(2+). His-144 contacts Mg(2+). The segment at His-205–Leu-417 is GTP cyclohydrolase II. Arg-259–Glu-263 contacts GTP. Zn(2+) contacts are provided by Cys-264, Cys-275, and Cys-277. Residues Gln-280, Glu-303 to Arg-305, and Thr-325 each bind GTP. The active-site Proton acceptor; for GTP cyclohydrolase activity is Asp-337. Arg-339 acts as the Nucleophile; for GTP cyclohydrolase activity in catalysis. GTP contacts are provided by Thr-360 and Lys-365.

This sequence in the N-terminal section; belongs to the DHBP synthase family. It in the C-terminal section; belongs to the GTP cyclohydrolase II family. Mg(2+) serves as cofactor. The cofactor is Mn(2+). It depends on Zn(2+) as a cofactor.

It catalyses the reaction D-ribulose 5-phosphate = (2S)-2-hydroxy-3-oxobutyl phosphate + formate + H(+). The enzyme catalyses GTP + 4 H2O = 2,5-diamino-6-hydroxy-4-(5-phosphoribosylamino)-pyrimidine + formate + 2 phosphate + 3 H(+). It participates in cofactor biosynthesis; riboflavin biosynthesis; 2-hydroxy-3-oxobutyl phosphate from D-ribulose 5-phosphate: step 1/1. Its pathway is cofactor biosynthesis; riboflavin biosynthesis; 5-amino-6-(D-ribitylamino)uracil from GTP: step 1/4. In terms of biological role, catalyzes the conversion of D-ribulose 5-phosphate to formate and 3,4-dihydroxy-2-butanone 4-phosphate. Its function is as follows. Catalyzes the conversion of GTP to 2,5-diamino-6-ribosylamino-4(3H)-pyrimidinone 5'-phosphate (DARP), formate and pyrophosphate. The polypeptide is Riboflavin biosynthesis protein RibBA (Rhodococcus jostii (strain RHA1)).